Reading from the N-terminus, the 101-residue chain is opdI (101 aa).

The chain crosses the membrane as a helical span at residues 30–49; the sequence is GGMGGALKIVFLGMMTYFIA. Residues 56–101 form a disordered region; that stretch reads SQHPPTDFNAPVQSVPQRAQRPSDTRLQGPVLLASNHPSGDSASPE. 2 stretches are compositionally biased toward polar residues: residues 66–81 and 91–101; these read PVQSVPQRAQRPSDTR and NHPSGDSASPE.

It is found in the membrane. In terms of biological role, part of the gene cluster that mediates the biosynthesis of oxopyrrolidines, polyketide-amino acid hybrid compounds with feature structures of tetramic acid. Does not seem to play a role in oxopyrrolidines A and B biosynthesis. The polypeptide is opdI (Penicillium oxalicum (strain 114-2 / CGMCC 5302) (Penicillium decumbens)).